The chain runs to 538 residues: Cytochrome P450 monooxygenase xanG (538 aa).

A helical membrane pass occupies residues 44 to 64; that stretch reads MILYYLASIPLAIICYLAWYL. An N-linked (GlcNAc...) asparagine glycan is attached at N378. C489 contacts heme.

This sequence belongs to the cytochrome P450 family. Heme is required as a cofactor.

It localises to the membrane. It participates in secondary metabolite biosynthesis. Functionally, cytochrome P450 monooxygenase; part of the gene cluster that mediates the biosynthesis of the isocyanide xanthocillin and its derivatives. The first step of the pathway consists in the conversion of tyrosine into a vinyl-isonitrile intermediate by the isocyanide synthase xanB. Subsequent oxidative dimerization of this intermediate to form xanthocillin may involve the cytochrome P450 monooxygenase xanG, whose expression is coregulated with that of XanB. Xanthocillin can be further modified by the isonitrile hydratase-like protein xanA which introduces N-formyl groups and the methyltransferase xanE which introduces methyl groups, leading to the production of several derivatives including fumiformamide. Finally, fumiformamide can be subject to both oxidative and reductive cyclization to yield melanocins E and F, respectively. The polypeptide is Cytochrome P450 monooxygenase xanG (Aspergillus fumigatus (strain ATCC MYA-4609 / CBS 101355 / FGSC A1100 / Af293) (Neosartorya fumigata)).